A 350-amino-acid polypeptide reads, in one-letter code: Uroporphyrinogen decarboxylase (350 aa).

Substrate is bound by residues 27-31 (RQAGR), Phe-46, Asp-76, Tyr-152, Ser-207, and His-321.

This sequence belongs to the uroporphyrinogen decarboxylase family. Homodimer.

It localises to the cytoplasm. It catalyses the reaction uroporphyrinogen III + 4 H(+) = coproporphyrinogen III + 4 CO2. It participates in porphyrin-containing compound metabolism; protoporphyrin-IX biosynthesis; coproporphyrinogen-III from 5-aminolevulinate: step 4/4. Its function is as follows. Catalyzes the decarboxylation of four acetate groups of uroporphyrinogen-III to yield coproporphyrinogen-III. The sequence is that of Uroporphyrinogen decarboxylase from Listeria innocua serovar 6a (strain ATCC BAA-680 / CLIP 11262).